The chain runs to 531 residues: L-aspartate oxidase (531 aa).

FAD contacts are provided by residues 11 to 14 (SGAA), Lys-33, 40 to 47 (NSVYAQGG), 151 to 152 (TA), and Asp-205. The active-site Proton donor/acceptor is the Arg-272. FAD is bound by residues Glu-353 and 369–370 (SL).

Belongs to the FAD-dependent oxidoreductase 2 family. NadB subfamily. Monomer. Homodimer. FAD is required as a cofactor.

It is found in the cytoplasm. It catalyses the reaction L-aspartate + O2 = iminosuccinate + H2O2. The catalysed reaction is fumarate + L-aspartate = iminosuccinate + succinate. It participates in cofactor biosynthesis; NAD(+) biosynthesis; iminoaspartate from L-aspartate (oxidase route): step 1/1. In terms of biological role, catalyzes the oxidation of L-aspartate to iminoaspartate, the first step in the de novo biosynthesis of NAD(+). Can use either oxygen or fumarate as electron acceptors, which allows the enzyme to be functional under aerobic and anaerobic conditions. This Bacillus subtilis (strain 168) protein is L-aspartate oxidase.